Reading from the N-terminus, the 1489-residue chain is MSLAVLLNKEDKDISDFSKTTAGKSAKKNSRERVADVAPTRVLDKKQAYLSQLNSEFNRIKRRDSIEQLYQDWKFINLQEFELISEWNQQSKDWQFDNTNDSQDLHFKKLYRDMSMINKEWAEYQSFKNANLSDIINEKDADEDEEDDEDELEDGEEDMEEDEASTGRHTNGKSMRGNGIQKSRKKDAAAAAAIGKAIKDDQTHADTVVTVNGDENEDGNNGEDEDNDNDNENNNDNDNDNENENDNDSDNDDEEENGEEDEEEEEIEDLDEEDFAAFEEQDDNDDEDFNPDVEKRRKRSSSSSSSTKLSMNSLSLITSKKINKNITINSDRPKIVRELIKMCNKNKHQKIKKRRFTNCIVTDYNPIDSKLNIKITLKQYHVKRLKKLINDAKREREREEALKNNVGLDGNDLDNDEDGSESHKRRKLNNNTANGADDANKRKFNTRHGLPTYGMKMNAKEARAIQRHYDNTYTTIWKDMARKDSTKMSRLVQQIQSIRSTNFRKTSSLCAREAKKWQSKNFKQIKDFQTRARRGIREMSNFWKKNEREERDLKKKIEKEAMEQAKKEEEEKESKRQAKKLNFLLTQTELYSHFIGRKIKTNELEGNNVSSNDSESQKNIDISALAPNKNDFHAIDFDNENDEQLRLRAAENASNALAETRAKAKQFDDHANAHEEEEEEDELNFQNPTSLGEITIEQPKILACTLKEYQLKGLNWLANLYDQGINGILADEMGLGKTVQSISVLAHLAENHNIWGPFLVVTPASTLHNWVNEISKFLPQFKILPYWGNANDRKVLRKFWDRKNLRYNKNAPFHVMVTSYQMVVTDANYLQKMKWQYMILDEAQAIKSSQSSRWKNLLSFHCRNRLLLTGTPIQNSMQELWALLHFIMPSLFDSHDEFNEWFSKDIESHAEANTKLNQQQLRRLHMILKPFMLRRVKKNVQSELGDKIEIDVLCDLTQRQAKLYQVLKSQISTNYDAIENAATNDSTSNSASNSGSDQNLINAVMQFRKVCNHPDLFERADVDSPFSFTTFGKTTSMLTASVANNNSSVISNSNMNLSSMSSNNISNGKFTDLIYSSRNPIKYSLPRLIYEDLILPNYNNDVDIANKLKNVKFNIFNPSTNYELCLFLSKLTGEPSLNEFFRVSTTPLLKRVIERTNGPKNTDSLSFKTITQELLEVTRNAPSEGVMASLLNVEKHAYEREYLNCIQRGYHPNVSAPPVTIEVLGSSHVTNSINNELFDPLISQALSDIPAITQYNMHVKKGIPVEDFPKTGLFPEPLNKNFSSNISMPSMDRFITESAKLRKLDELLVKLKSEGHRVLIYFQMTKMMDLMEEYLTYRQYNHIRLDGSSKLEDRRDLVHDWQTNPEIFVFLLSTRAGGLGINLTAADTVIFYDSDWNPTIDSQAMDRAHRLGQTRQVTVYRLLVRGTIEERMRDRAKQKEQVQQVVMEGKTQEKNIKTIEVGENDSEVTREGSKSISQDGIKEAASALA.

Residues Ser-65, Ser-115, and Ser-133 each carry the phosphoserine modification. 2 disordered regions span residues 137-311 and 393-452; these read NEKD…KLSM and KRER…GLPT. Composition is skewed to acidic residues over residues 140 to 164 and 214 to 291; these read DADEDEEDDEDELEDGEEDMEEDEA and DENE…DFNP. Low complexity predominate over residues 301 to 311; that stretch reads SSSSSSTKLSM. Residues 393-402 are compositionally biased toward basic and acidic residues; it reads KREREREEAL. Residues 476 to 601 form the DBINO domain; that stretch reads IWKDMARKDS…SHFIGRKIKT (126 aa). The residue at position 610 (Ser-610) is a Phosphoserine. The region spanning 718–890 is the Helicase ATP-binding domain; that stretch reads ANLYDQGING…WALLHFIMPS (173 aa). Position 731–738 (731–738) interacts with ATP; that stretch reads DEMGLGKT. Positions 841-844 match the DEAQ box motif; sequence DEAQ. A Helicase C-terminal domain is found at 1303–1467; that stretch reads KLDELLVKLK…TIEVGENDSE (165 aa). A disordered region spans residues 1456–1489; it reads IKTIEVGENDSEVTREGSKSISQDGIKEAASALA.

It belongs to the SNF2/RAD54 helicase family. As to quaternary structure, component of the chromatin-remodeling INO80 complex, at least composed of ARP4, ARP5, ARP8, RVB1, RVB2, TAF14, NHP10, IES1, IES3, IES4, IES6, ACT1, IES2, IES5 and INO80.

The protein localises to the nucleus. It carries out the reaction ATP + H2O = ADP + phosphate + H(+). ATPase component of the INO80 complex which remodels chromatin by shifting nucleosomes and is involved in DNA repair. Its ability to induce transcription of some phosphate-responsive genes is modulated by inositol polyphosphates. The INO80 complex is involved in DNA repair by associating with 'Ser-129' phosphorylated H2A histones as a response to DNA damage. The protein is Chromatin-remodeling ATPase INO80 (INO80) of Saccharomyces cerevisiae (strain ATCC 204508 / S288c) (Baker's yeast).